A 702-amino-acid polypeptide reads, in one-letter code: MADSGLLLKRGSCRSTWLRVRKARPQLILSRRPRRRLGSLRWCGRRRLRWRLLQAQASGVDWREGARQVSRAAAARRPNTATPSPIPSPTPASEPESEPELESASSCHRPLLIPPVRPVGPGRALLLLPVEQGFTFSGICRVTCLYGQVQVFGFTISQGQPAQDIFSVYTHSCLSIHALHYSQPEKSKKELKREARNLLKSHLNLDDRRWSMQNFSPQCSIVLLEHLKTATVNFITSYPGSSYIFVQESPTPQIKPEYLALRSVGIRREKKRKGLQLTESTLSALEELVNVSCEEVDGCPVILVCGSQDVGKSTFNRYLINHLLNSLPCVDYLECDLGQTEFTPPGCISLLNITEPVLGPPFTHLRTPQKMVYYGKPSCKNNYENYIDIVKYVFSAYKRESPLIVNTMGWVSDQGLLLLIDLIRLLSPSHVVQFRSDHSKYMPDLTPQYVDDMDGLYTKSKTKMRNRRFRLAAFADALEFADEEKESPVEFTGHKLIGVYTDFAFRITPRNRESHNKILRDLSILSYLSQLQPPMPKPLSPLHSLTPYQVPFNAVALRITHSDVAPTHILYAVNASWVGLCKIQDDVRGYTNGPILLAQTPICDCLGFGICRGIDMEKRLYHILTPVPPEELRTVNCLLVGAIAIPHCVLKCQRGIEGTVPYVTTDYNFKLPGASEKIGAREPEEAHKEKPYRRPKFCRKMK.

Residue A2 is modified to N-acetylalanine. The short motif at 31–47 (RRPRRRLGSLRWCGRRR) is the Nucleolar localization signal element. Residues 69-101 (VSRAAAARRPNTATPSPIPSPTPASEPESEPEL) are disordered. Low complexity predominate over residues 71–83 (RAAAARRPNTATP). 306 to 313 (GSQDVGKS) is an ATP binding site. The tract at residues 480–702 (FADEEKESPV…RRPKFCRKMK (223 aa)) is interaction with LAS1L. K485 participates in a covalent cross-link: Glycyl lysine isopeptide (Lys-Gly) (interchain with G-Cter in SUMO2). Residue S487 is modified to Phosphoserine. The segment covering 680 to 689 (AREPEEAHKE) has biased composition (basic and acidic residues). Positions 680–702 (AREPEEAHKEKPYRRPKFCRKMK) are disordered. Over residues 690 to 702 (KPYRRPKFCRKMK) the composition is skewed to basic residues.

The protein belongs to the Clp1 family. NOL9/GRC3 subfamily. Interacts with PELP1, WDR18 and SENP3. Interacts with LAS1L to form an ITS2 pre-rRNA endonuclease-kinase complex.

The protein localises to the nucleus. The protein resides in the nucleolus. It carries out the reaction a 5'-end dephospho-2'-deoxyribonucleoside-DNA + ATP = a 5'-end 5'-phospho-2'-deoxyribonucleoside-DNA + ADP + H(+). The enzyme catalyses a 5'-end dephospho-ribonucleoside-RNA + ATP = a 5'-end 5'-phospho-ribonucleoside-RNA + ADP + H(+). Polynucleotide kinase that can phosphorylate the 5'-hydroxyl groups of single-stranded and double-stranded RNA and DNA substrates. Involved in rRNA processing and its kinase activity is required for the processing of the 32S precursor into 5.8S and 28S rRNAs, more specifically for the generation of the major 5.8S(S) form. Required for the efficient pre-rRNA processing of internal transcribed spacer 2 (ITS2). Associates with LAS1L to form an ITS2 pre-rRNA endonuclease-kinase complex and is responsible for the transport of this complex into the nucleolus. This Homo sapiens (Human) protein is Polynucleotide 5'-hydroxyl-kinase NOL9 (NOL9).